A 142-amino-acid chain; its full sequence is Hdr-like menaquinol oxidoreductase cytochrome c subunit (142 aa).

Residues M1–Y6 lie on the Cytoplasmic side of the membrane. A helical transmembrane segment spans residues V7 to M27. At A28 to S142 the chain is on the extracellular side. Residues C93, C96, H97, C104, C107, H108, C117, C120, and H121 each contribute to the heme site.

As to quaternary structure, consists of five subunits: an integral membrane subunit, a cytochrome b-like subunit, a cytochrome c subunit and two iron-sulfur subunits. In terms of processing, binds 3 heme groups per subunit.

The protein resides in the cell membrane. Its function is as follows. Has menaquinol-oxidizing activity. HmeA, HmeB and HmeE subunits may together catalyze electron transfer from menaquinol to cytochrome c. This chain is Hdr-like menaquinol oxidoreductase cytochrome c subunit (hmeE), found in Archaeoglobus fulgidus (strain ATCC 49558 / DSM 4304 / JCM 9628 / NBRC 100126 / VC-16).